Reading from the N-terminus, the 330-residue chain is UDP-glucose 4-epimerase (330 aa).

NAD(+)-binding positions include 11-12, 31-36, 51-52, 73-77, Asn92, Ser117, Tyr141, Lys145, and Phe169; these read YI, DALYTG, DI, and FAAYS. Substrate-binding residues include Ser117 and Tyr141. Tyr141 functions as the Proton acceptor in the catalytic mechanism. Residues Asn170, 189–190, 206–208, Arg221, and 282–285 each bind substrate; these read HL, TIF, and RGGD.

It belongs to the NAD(P)-dependent epimerase/dehydratase family. As to quaternary structure, homodimer. NAD(+) serves as cofactor.

The catalysed reaction is UDP-alpha-D-glucose = UDP-alpha-D-galactose. It functions in the pathway carbohydrate metabolism; galactose metabolism. Involved in the metabolism of galactose. Catalyzes the conversion of UDP-galactose (UDP-Gal) to UDP-glucose (UDP-Glc) through a mechanism involving the transient reduction of NAD. It also could be involved in preparation of carbohydrate residues for incorporation into complex polymers, such as exopolysaccharides. The polypeptide is UDP-glucose 4-epimerase (galE) (Lactobacillus helveticus (Lactobacillus suntoryeus)).